We begin with the raw amino-acid sequence, 1032 residues long: Kinesin heavy chain isoform 5A (1032 aa).

Position 2 is an N-acetylalanine (alanine 2). The region spanning 9–327 (SIKVLCRFRP…LMFGQRAKTI (319 aa)) is the Kinesin motor domain. Position 86–93 (86–93 (GQTSSGKT)) interacts with ATP. The microtubule-binding stretch occupies residues 174 to 315 (VSGPEEILDV…PSSYNDAETK (142 aa)). Residues 271–361 (EGTKSYVPYR…KTKAQKETIA (91 aa)) form a necessary for interaction with ZFYVE27 region. Residues 331-906 (ASVNLELTAE…VDRIKEAVRY (576 aa)) adopt a coiled-coil conformation. Residues 353-1032 (TKAQKETIAK…FPLHQETAAS (680 aa)) are interaction with BICD2. Threonine 397 carries the phosphothreonine modification. The disordered stretch occupies residues 904–939 (VRYKSSGKRGHSAQIAKPVRPGHYPASSPTNPYGTR). The interval 907–1032 (KSSGKRGHSA…FPLHQETAAS (126 aa)) is globular.

The protein belongs to the TRAFAC class myosin-kinesin ATPase superfamily. Kinesin family. Kinesin subfamily. Oligomer composed of two heavy chains and two light chains. Interacts with GRIP1. Interacts with FMR1 (via C-terminus); this interaction is increased in a mGluR-dependent manner. Interacts with BORCS5. Interacts with ZFYVE27. Interacts with VAPA, VAPB, SURF4, RAB11A (GDP-bound form), RAB11B (GDP-bound form) and RTN3 in a ZFYVE27-dependent manner. Interacts with BICD2. Interacts with DTNB.

It is found in the cytoplasm. The protein localises to the perinuclear region. It localises to the cytoskeleton. Its subcellular location is the perikaryon. It catalyses the reaction ATP + H2O + a kinesin associated with a microtubule at position (n) = ADP + phosphate a kinesin associated with a microtubule at position (n+1, toward the plus end).. Functionally, microtubule-dependent motor required for slow axonal transport of neurofilament proteins (NFH, NFM and NFL). Can induce formation of neurite-like membrane protrusions in non-neuronal cells in a ZFYVE27-dependent manner. The ZFYVE27-KIF5A complex contributes to the vesicular transport of VAPA, VAPB, SURF4, RAB11A, RAB11B and RTN3 proteins in neurons. Required for anterograde axonal transportation of MAPK8IP3/JIP3 which is essential for MAPK8IP3/JIP3 function in axon elongation. The chain is Kinesin heavy chain isoform 5A (KIF5A) from Pongo abelii (Sumatran orangutan).